A 109-amino-acid chain; its full sequence is Transmembrane protein 233 (109 aa).

The disordered stretch occupies residues 1-30 (MSQYAPSPDFKRALDSSPEANTEDDKTEED). The Cytoplasmic segment spans residues 1–41 (MSQYAPSPDFKRALDSSPEANTEDDKTEEDVPMPKNYLWLT). The segment covering 21-30 (NTEDDKTEED) has biased composition (acidic residues). The helical intramembrane region spans 42-62 (IVSCFCPAYPINIVALVFSIM). Residues 63–84 (SLNSYNDGDYEGARRLGRNAKW) are Cytoplasmic-facing. The chain crosses the membrane as a helical span at residues 85 to 105 (VAIASIIIGLLIIGISCAVHF). Residues 106–109 (TRNA) are Extracellular-facing.

Belongs to the CD225/Dispanin family. In terms of assembly, interacts with the giant stinging tree toxin ExTxA (AC P0DQP3). Interacts with Nav1.7/SCN9A. Interacts with Nav1.1/SCN1A, Nav1.2/SCN2A, Nav1.3/SCN3A, Nav1.4/SCN4A, Nav1.5/SCN5A, and Nav1.6/SCN8A.

The protein localises to the cell membrane. Functionally, probable accessory protein of voltage-gated sodium channels. In Homo sapiens (Human), this protein is Transmembrane protein 233.